The following is a 387-amino-acid chain: Sulfopyruvate decarboxylase (387 aa).

Belongs to the TPP enzyme family. Requires thiamine diphosphate as cofactor.

It catalyses the reaction 3-sulfopyruvate + H(+) = sulfoacetaldehyde + CO2. It functions in the pathway cofactor biosynthesis; coenzyme M biosynthesis. Its function is as follows. Involved in the biosynthesis of the coenzyme M (2-mercaptoethanesulfonic acid). Catalyzes the decarboxylation of sulfopyruvate to sulfoacetaldehyde. Is not able to decarboxylate the analogous compounds 2-oxoglutarate or 2-oxosuberate. The protein is Sulfopyruvate decarboxylase of Methanosarcina acetivorans (strain ATCC 35395 / DSM 2834 / JCM 12185 / C2A).